A 483-amino-acid chain; its full sequence is Glutamyl-tRNA(Gln) amidotransferase subunit A (483 aa).

Catalysis depends on charge relay system residues Lys-76 and Ser-151. Ser-175 acts as the Acyl-ester intermediate in catalysis.

This sequence belongs to the amidase family. GatA subfamily. In terms of assembly, heterotrimer of A, B and C subunits.

It catalyses the reaction L-glutamyl-tRNA(Gln) + L-glutamine + ATP + H2O = L-glutaminyl-tRNA(Gln) + L-glutamate + ADP + phosphate + H(+). In terms of biological role, allows the formation of correctly charged Gln-tRNA(Gln) through the transamidation of misacylated Glu-tRNA(Gln) in organisms which lack glutaminyl-tRNA synthetase. The reaction takes place in the presence of glutamine and ATP through an activated gamma-phospho-Glu-tRNA(Gln). This is Glutamyl-tRNA(Gln) amidotransferase subunit A from Ectopseudomonas mendocina (strain ymp) (Pseudomonas mendocina).